Here is a 345-residue protein sequence, read N- to C-terminus: Endochitinase 4 (345 aa).

An N-terminal signal peptide occupies residues 1 to 27 (MAPLLNTGLVILPLIVSTLLGPMPAFA). N-linked (GlcNAc...) asparagine glycosylation is found at Asn-29 and Asn-89. In terms of domain architecture, GH18 spans 41-345 (KVLQGYWENW…TFGDNVKGRL (305 aa)). The active-site Proton donor is the Glu-163. An N-linked (GlcNAc...) asparagine glycan is attached at Asn-316.

It belongs to the glycosyl hydrolase 18 family. Chitinase class V subfamily.

It is found in the secreted. The catalysed reaction is Random endo-hydrolysis of N-acetyl-beta-D-glucosaminide (1-&gt;4)-beta-linkages in chitin and chitodextrins.. Its function is as follows. Secreted chitinase involved in the degradation of chitin, a component of the cell walls of fungi and exoskeletal elements of some animals (including worms and arthropods). Participates in the infection process and directly acts in the penetration process of the host cuticle. This chain is Endochitinase 4 (chi4), found in Metarhizium robertsii (strain ARSEF 23 / ATCC MYA-3075) (Metarhizium anisopliae (strain ARSEF 23)).